The primary structure comprises 293 residues: 4-diphosphocytidyl-2-C-methyl-D-erythritol kinase (293 aa).

The active site involves Lys10. 96–106 lines the ATP pocket; sequence PVASGIGGGSS. Asp138 is an active-site residue.

The protein belongs to the GHMP kinase family. IspE subfamily.

The enzyme catalyses 4-CDP-2-C-methyl-D-erythritol + ATP = 4-CDP-2-C-methyl-D-erythritol 2-phosphate + ADP + H(+). It participates in isoprenoid biosynthesis; isopentenyl diphosphate biosynthesis via DXP pathway; isopentenyl diphosphate from 1-deoxy-D-xylulose 5-phosphate: step 3/6. Functionally, catalyzes the phosphorylation of the position 2 hydroxy group of 4-diphosphocytidyl-2C-methyl-D-erythritol. In Chelativorans sp. (strain BNC1), this protein is 4-diphosphocytidyl-2-C-methyl-D-erythritol kinase.